The following is a 109-amino-acid chain: uncharacterized protein (109 aa).

Residues 27–89 (KEEAHQFRDK…LKRIDELIAV (63 aa)) adopt a coiled-coil conformation.

This is an uncharacterized protein from Streptococcus pneumoniae.